Here is a 105-residue protein sequence, read N- to C-terminus: Diuretic hormone class 2 (105 aa).

Residues 1-23 (MTVLCTLMAFVMVVAISSLTVDA) form the signal peptide. Positions 24 to 63 (IPHSHESYWDQQDDIDRDEFLELLSRLSRTVMNRPEMENS) are excised as a propeptide. The residue at position 96 (Pro-96) is a Proline amide. A propeptide spanning residues 101–105 (RSEQA) is cleaved from the precursor.

In terms of tissue distribution, expressed in central brain, antennal lobes, retrocerebral complex and gnathal, thoracic and abdominal ganglia but not in optical lobes (at protein level).

Its subcellular location is the secreted. Regulation of fluid secretion. Stimulates Malpighian tubules fluid secretion. In Camponotus floridanus (Florida carpenter ant), this protein is Diuretic hormone class 2.